An 89-amino-acid chain; its full sequence is Small ribosomal subunit protein uS15 (89 aa).

This sequence belongs to the universal ribosomal protein uS15 family. Part of the 30S ribosomal subunit. Forms a bridge to the 50S subunit in the 70S ribosome, contacting the 23S rRNA.

One of the primary rRNA binding proteins, it binds directly to 16S rRNA where it helps nucleate assembly of the platform of the 30S subunit by binding and bridging several RNA helices of the 16S rRNA. Functionally, forms an intersubunit bridge (bridge B4) with the 23S rRNA of the 50S subunit in the ribosome. The sequence is that of Small ribosomal subunit protein uS15 from Salinispora arenicola (strain CNS-205).